Consider the following 93-residue polypeptide: CRISPR-associated endoribonuclease Cas2 1 (93 aa).

Aspartate 8 contributes to the Mg(2+) binding site.

The protein belongs to the CRISPR-associated endoribonuclease Cas2 protein family. In terms of assembly, homodimer, forms a heterotetramer with a Cas1 homodimer. It depends on Mg(2+) as a cofactor.

In terms of biological role, CRISPR (clustered regularly interspaced short palindromic repeat), is an adaptive immune system that provides protection against mobile genetic elements (viruses, transposable elements and conjugative plasmids). CRISPR clusters contain sequences complementary to antecedent mobile elements and target invading nucleic acids. CRISPR clusters are transcribed and processed into CRISPR RNA (crRNA). Functions as a ssRNA-specific endoribonuclease. Involved in the integration of spacer DNA into the CRISPR cassette. The polypeptide is CRISPR-associated endoribonuclease Cas2 1 (Chloroflexus aurantiacus (strain ATCC 29366 / DSM 635 / J-10-fl)).